The primary structure comprises 84 residues: Small ribosomal subunit protein bS20 (84 aa).

It belongs to the bacterial ribosomal protein bS20 family.

Binds directly to 16S ribosomal RNA. The polypeptide is Small ribosomal subunit protein bS20 (Azobacteroides pseudotrichonymphae genomovar. CFP2).